We begin with the raw amino-acid sequence, 362 residues long: MMKLQDFDYQLPQSRIAQSPCAKRDHARMMVLDRRIGSLEHRHFYDFPDFVRKGDVLVINDSKVIPARLSGRKETGSRIELLLLSRYSDSPAVPETDSTEWPFFRVGVEETWEALLKPGKRIRIGTSIFFDDHSRATVIERINEKKWLLTFNTALPFDLFLQRYGKAPLPPYIKREKKNAQMPEDRDRYQTIYARSPGSIAAPTAGFHFSEALFKTLRELEIVIAPVTLHVGFGTFTPIETEDVEDHVMEVESFSISPESSDKINSAERVIAVGTTSTRVLESAADEQGRVHPMSGQSRLFIYPGYRFKRVQALLTNFHLPKSSLFLLACAFAGKDRIQQAYATAIQEEYRFYSYGDCMLII.

This sequence belongs to the QueA family. As to quaternary structure, monomer.

The protein resides in the cytoplasm. It catalyses the reaction 7-aminomethyl-7-carbaguanosine(34) in tRNA + S-adenosyl-L-methionine = epoxyqueuosine(34) in tRNA + adenine + L-methionine + 2 H(+). The protein operates within tRNA modification; tRNA-queuosine biosynthesis. In terms of biological role, transfers and isomerizes the ribose moiety from AdoMet to the 7-aminomethyl group of 7-deazaguanine (preQ1-tRNA) to give epoxyqueuosine (oQ-tRNA). In Syntrophus aciditrophicus (strain SB), this protein is S-adenosylmethionine:tRNA ribosyltransferase-isomerase.